The chain runs to 192 residues: MRIGLLGGSFNPPHQAHRAISLFALKRLQLDRVWWLVTPGNPLKDNGGLHALAERAAAARKVAADPRIEISCLESVIGTRYTADTIDYLRRRASRLRFVWIMGADNLAQFHRWQKWQHIAAQVPIAVVDRPPRSFRALNAPAARALARYRVAEADASRLADRAAPAWVYLTGLKMSLSSTGLRNPDGSWKSF.

The protein belongs to the NadD family.

It catalyses the reaction nicotinate beta-D-ribonucleotide + ATP + H(+) = deamido-NAD(+) + diphosphate. The protein operates within cofactor biosynthesis; NAD(+) biosynthesis; deamido-NAD(+) from nicotinate D-ribonucleotide: step 1/1. In terms of biological role, catalyzes the reversible adenylation of nicotinate mononucleotide (NaMN) to nicotinic acid adenine dinucleotide (NaAD). The protein is Probable nicotinate-nucleotide adenylyltransferase of Bradyrhizobium sp. (strain ORS 278).